The following is a 193-amino-acid chain: Large ribosomal subunit protein uL18 (193 aa).

The protein belongs to the universal ribosomal protein uL18 family. Part of the 50S ribosomal subunit. Contacts the 5S and 23S rRNAs.

This is one of the proteins that bind and probably mediate the attachment of the 5S RNA into the large ribosomal subunit, where it forms part of the central protuberance. The sequence is that of Large ribosomal subunit protein uL18 from Methanococcus maripaludis (strain C6 / ATCC BAA-1332).